The chain runs to 560 residues: uncharacterized protein (560 aa).

In terms of domain architecture, ABC transmembrane type-1 spans 1–281 (MLWNWVALVG…LGSFFHVAMN (281 aa)). Transmembrane regions (helical) follow at residues 2–22 (LWNW…SYIL), 32–52 (LLSA…RAFA), 108–128 (IYFG…LTLF), 138–160 (TAII…NKIA), 168–188 (WSIY…LITL), 223–243 (VSLM…TALL), and 249–269 (QLSV…FIPL). Residues 314–547 (VEIKDLHFSY…QGAYAEMFQQ (234 aa)) enclose the ABC transporter domain. Residue 347–354 (GKSGCGKS) participates in ATP binding.

The protein belongs to the ABC transporter superfamily.

It localises to the cell inner membrane. This is an uncharacterized protein from Haemophilus influenzae (strain ATCC 51907 / DSM 11121 / KW20 / Rd).